The chain runs to 76 residues: Large ribosomal subunit protein bL31 (76 aa).

It belongs to the bacterial ribosomal protein bL31 family. Type A subfamily. As to quaternary structure, part of the 50S ribosomal subunit.

Binds the 23S rRNA. This Beijerinckia indica subsp. indica (strain ATCC 9039 / DSM 1715 / NCIMB 8712) protein is Large ribosomal subunit protein bL31.